A 987-amino-acid polypeptide reads, in one-letter code: Eukaryotic translation initiation factor 3 subunit A (987 aa).

Residues 93–122 (LHLATDKAEQARSQADALEEALDVDDLEAD) are a coiled coil. The PCI domain maps to 316 to 513 (LQLIASSVVL…GVVIFGNLGI (198 aa)). 2 coiled-coil regions span residues 556-742 (TVEK…EKNR) and 797-858 (LKIE…REEL). The segment covering 808–859 (QEEEEARKQEEAERLKKVEAERKANLDKAFEKQRQREIELEEKSRREREELL) has biased composition (basic and acidic residues). The interval 808–987 (QEEEEARKQE…GSSRPRPTQR (180 aa)) is disordered. Residues 872-894 (PTVTPVGTTAPAAAAAAAGAPAA) show a composition bias toward low complexity. 2 stretches are compositionally biased toward polar residues: residues 905–916 (TEVSGPSAPTSS) and 976–987 (TFGSSRPRPTQR).

The protein belongs to the eIF-3 subunit A family. Component of the eukaryotic translation initiation factor 3 (eIF-3) complex. Binds to the translation initiation factor TIF3H1.

It is found in the cytoplasm. Functionally, RNA-binding component of the eukaryotic translation initiation factor 3 (eIF-3) complex, which is involved in protein synthesis of a specialized repertoire of mRNAs and, together with other initiation factors, stimulates binding of mRNA and methionyl-tRNAi to the 40S ribosome. The eIF-3 complex specifically targets and initiates translation of a subset of mRNAs involved in cell proliferation. This Arabidopsis thaliana (Mouse-ear cress) protein is Eukaryotic translation initiation factor 3 subunit A (TIF3A1).